A 502-amino-acid chain; its full sequence is Putative ZDHHC-type palmitoyltransferase 3 (502 aa).

The tract at residues 1–80 (MVNNNNKNNK…ESTNENNKKL (80 aa)) is disordered. The span at 10–30 (KINDRENEENEKNKKKDKIYE) shows a compositional bias: basic and acidic residues. Low complexity predominate over residues 31 to 52 (NKIGINENNNENNNYQNENFIY). The N-linked (GlcNAc...) asparagine glycan is linked to Asn58. Residues 59–73 (DTQEGDISEIQEEST) show a composition bias toward acidic residues. A run of 2 helical transmembrane segments spans residues 104–124 (FFIV…IKLV) and 134–154 (LEIS…YNLY). The disordered stretch occupies residues 200–281 (IANDDPISSS…NNNNNNNKNQ (82 aa)). Positions 203–212 (DDPISSSSDF) are enriched in low complexity. The span at 213–222 (SDSDDDDQDE) shows a compositional bias: acidic residues. Positions 248 to 280 (NSNNNNSNNNNNNNKNRNRNNNNNNNNNNNNKN) are enriched in low complexity. N-linked (GlcNAc...) asparagine glycans are attached at residues Asn252 and Asn280. Positions 299-349 (KFCITCGLYREPRSFHCSTCNNCVENFDHHCVWIGNCIGRRNYREFFYFIT) constitute a DHHC domain. Catalysis depends on Cys329, which acts as the S-palmitoyl cysteine intermediate. Residues 344-364 (FFYFITTTLIYALYLLSMSIV) form a helical membrane-spanning segment. 3 N-linked (GlcNAc...) asparagine glycosylation sites follow: Asn371, Asn388, and Asn393. Residues 419–439 (GLCIFIIIFGFIMSLLLGFLV) form a helical membrane-spanning segment. 3 N-linked (GlcNAc...) asparagine glycosylation sites follow: Asn449, Asn483, and Asn494.

Belongs to the DHHC palmitoyltransferase family.

It localises to the membrane. The enzyme catalyses L-cysteinyl-[protein] + hexadecanoyl-CoA = S-hexadecanoyl-L-cysteinyl-[protein] + CoA. This Dictyostelium discoideum (Social amoeba) protein is Putative ZDHHC-type palmitoyltransferase 3.